Here is a 315-residue protein sequence, read N- to C-terminus: Lipoyl synthase (315 aa).

[4Fe-4S] cluster is bound by residues C62, C67, C73, C88, C92, C95, and S302. One can recognise a Radical SAM core domain in the interval 74 to 292 (FNHGTATFMI…KIALKLGFIR (219 aa)).

This sequence belongs to the radical SAM superfamily. Lipoyl synthase family. [4Fe-4S] cluster serves as cofactor.

It localises to the cytoplasm. It catalyses the reaction [[Fe-S] cluster scaffold protein carrying a second [4Fe-4S](2+) cluster] + N(6)-octanoyl-L-lysyl-[protein] + 2 oxidized [2Fe-2S]-[ferredoxin] + 2 S-adenosyl-L-methionine + 4 H(+) = [[Fe-S] cluster scaffold protein] + N(6)-[(R)-dihydrolipoyl]-L-lysyl-[protein] + 4 Fe(3+) + 2 hydrogen sulfide + 2 5'-deoxyadenosine + 2 L-methionine + 2 reduced [2Fe-2S]-[ferredoxin]. It participates in protein modification; protein lipoylation via endogenous pathway; protein N(6)-(lipoyl)lysine from octanoyl-[acyl-carrier-protein]: step 2/2. Functionally, catalyzes the radical-mediated insertion of two sulfur atoms into the C-6 and C-8 positions of the octanoyl moiety bound to the lipoyl domains of lipoate-dependent enzymes, thereby converting the octanoylated domains into lipoylated derivatives. The sequence is that of Lipoyl synthase from Vesicomyosocius okutanii subsp. Calyptogena okutanii (strain HA).